The primary structure comprises 395 residues: 1-deoxy-D-xylulose 5-phosphate reductoisomerase (395 aa).

NADPH-binding residues include Thr-10, Gly-11, Ser-12, Ile-13, Asn-38, and Asn-123. 1-deoxy-D-xylulose 5-phosphate is bound at residue Lys-124. Position 125 (Glu-125) interacts with NADPH. Asp-149 is a Mn(2+) binding site. Positions 150, 151, 185, and 208 each coordinate 1-deoxy-D-xylulose 5-phosphate. A Mn(2+)-binding site is contributed by Glu-151. Position 214 (Gly-214) interacts with NADPH. 1-deoxy-D-xylulose 5-phosphate is bound by residues Ser-221, Asn-226, Lys-227, and Glu-230. Position 230 (Glu-230) interacts with Mn(2+).

It belongs to the DXR family. Requires Mg(2+) as cofactor. Mn(2+) is required as a cofactor.

The catalysed reaction is 2-C-methyl-D-erythritol 4-phosphate + NADP(+) = 1-deoxy-D-xylulose 5-phosphate + NADPH + H(+). It participates in isoprenoid biosynthesis; isopentenyl diphosphate biosynthesis via DXP pathway; isopentenyl diphosphate from 1-deoxy-D-xylulose 5-phosphate: step 1/6. Catalyzes the NADPH-dependent rearrangement and reduction of 1-deoxy-D-xylulose-5-phosphate (DXP) to 2-C-methyl-D-erythritol 4-phosphate (MEP). This chain is 1-deoxy-D-xylulose 5-phosphate reductoisomerase, found in Shewanella woodyi (strain ATCC 51908 / MS32).